A 282-amino-acid chain; its full sequence is MAGGGDHSQTNGGHVDQRALEEGRKEEFADQGCAAMVVSVPFIQKIIAEIFGTYFLMFAGCGAVTINASKNGQITFPGVAIVWGLAVMVMVYAVGHISGAHFNPAVTLAFATSGRFPWRQLPAYVLAQMLGATLASGTLRLMFGGRHEHFPGTLPTGSEVQSLVIEIITTFYLMFVISGVATDNRAIGELAGLAVGATILLNVLIAGPVSGASMNPARSVGPALVSGEYTSIWVYVVGPVVGAVAGAWAYNLIRFTNKPLREITKSTSFLKSTSRMNSAASA.

The next 2 membrane-spanning stretches (helical) occupy residues 46-66 (IIAEIFGTYFLMFAGCGAVTI) and 74-94 (ITFPGVAIVWGLAVMVMVYAV). An NPA 1 motif is present at residues 103 to 105 (NPA). The next 3 membrane-spanning stretches (helical) occupy residues 125–145 (VLAQMLGATLASGTLRLMFGG), 162–182 (SLVIEIITTFYLMFVISGVAT), and 186–206 (AIGELAGLAVGATILLNVLIA). Residues 215 to 217 (NPA) carry the NPA 2 motif. The chain crosses the membrane as a helical span at residues 232–252 (IWVYVVGPVVGAVAGAWAYNL).

The protein belongs to the MIP/aquaporin (TC 1.A.8) family. NIP (TC 1.A.8.12) subfamily.

The protein resides in the membrane. Functionally, aquaporins facilitate the transport of water and small neutral solutes across cell membranes. The protein is Aquaporin NIP1-1 (NIP1-1) of Zea mays (Maize).